A 523-amino-acid chain; its full sequence is Asparagine--tRNA ligase (523 aa).

The segment at 329–350 (SARGDTPLAARSTARTPPVRTP) is disordered.

It belongs to the class-II aminoacyl-tRNA synthetase family. In terms of assembly, homodimer.

The protein resides in the cytoplasm. It carries out the reaction tRNA(Asn) + L-asparagine + ATP = L-asparaginyl-tRNA(Asn) + AMP + diphosphate + H(+). This Treponema pallidum (strain Nichols) protein is Asparagine--tRNA ligase.